A 212-amino-acid polypeptide reads, in one-letter code: Methylthioribulose-1-phosphate dehydratase (212 aa).

Zn(2+)-binding residues include H97 and H99.

Belongs to the aldolase class II family. MtnB subfamily. In terms of assembly, homotetramer. The cofactor is Zn(2+).

The enzyme catalyses 5-(methylsulfanyl)-D-ribulose 1-phosphate = 5-methylsulfanyl-2,3-dioxopentyl phosphate + H2O. It participates in amino-acid biosynthesis; L-methionine biosynthesis via salvage pathway; L-methionine from S-methyl-5-thio-alpha-D-ribose 1-phosphate: step 2/6. Its function is as follows. Catalyzes the dehydration of methylthioribulose-1-phosphate (MTRu-1-P) into 2,3-diketo-5-methylthiopentyl-1-phosphate (DK-MTP-1-P). This Bacillus cytotoxicus (strain DSM 22905 / CIP 110041 / 391-98 / NVH 391-98) protein is Methylthioribulose-1-phosphate dehydratase.